A 299-amino-acid chain; its full sequence is Taste receptor type 2 member 4 (299 aa).

Topologically, residues 1–9 (MLWLFYSSA) are extracellular. Residues 10-30 (IIASVILDFVGIIMSLFITVV) form a helical membrane-spanning segment. Residues 31-46 (NYKTWVKSHRISSSER) are Cytoplasmic-facing. A helical membrane pass occupies residues 47–67 (ILFSLGITRFFMLALFLVNTI). Topologically, residues 68–81 (YFVSSNKERSVYLS) are extracellular. Residues 82–102 (AFFVLCFMFLDSSSLWFVTLL) traverse the membrane as a helical segment. Topologically, residues 103 to 131 (NSLYCVKITNFQHSVFLLLKRNISPKIPR) are cytoplasmic. Residues 132 to 152 (LLPACVLISAFTTCLYITLSQ) form a helical membrane-spanning segment. The Extracellular portion of the chain corresponds to 153 to 172 (ASPFPELVTKRNNTSFNISE). N-linked (GlcNAc...) asparagine glycosylation is found at Asn-164, Asn-165, and Asn-169. The helical transmembrane segment at 173 to 193 (GILSLVVSFVLSSSLQFIINV) threads the bilayer. Over 194–230 (TSASLLIYSLRRHIRKMQKNATGFWNPQTEAHVGAMK) the chain is Cytoplasmic. Residues 231–251 (LMIYFLILYIPYSVATLVQYL) form a helical membrane-spanning segment. Residues 252-262 (PFYAGMDMGTK) are Extracellular-facing. The helical transmembrane segment at 263–283 (SICLIFATLYSPGHSVLIIIT) threads the bilayer. Over 284-299 (HPKLKTTAKKILCFKK) the chain is Cytoplasmic.

It belongs to the G-protein coupled receptor T2R family.

The protein localises to the membrane. The protein resides in the cell projection. Its subcellular location is the cilium membrane. Its function is as follows. Gustducin-coupled receptor implicated in the perception of bitter compounds in the oral cavity and the gastrointestinal tract. Signals through PLCB2 and the calcium-regulated cation channel TRPM5. In airway epithelial cells, binding of denatonium increases the intracellular calcium ion concentration and stimulates ciliary beat frequency. In Papio hamadryas (Hamadryas baboon), this protein is Taste receptor type 2 member 4 (TAS2R4).